Reading from the N-terminus, the 748-residue chain is Cytosolic phospholipase A2 (748 aa).

Residues 1-178 (MSFIDPYQHI…MKSFLGEENS (178 aa)) are phospholipid binding. The C2 domain occupies 6 to 124 (PYQHIVVEHQ…GEKKEVQLTF (119 aa)). Ca(2+)-binding residues include Asp-40, Thr-41, Asp-43, Asn-65, Asp-93, Ala-94, and Asn-95. Residues 138-740 (VCSSTDLRFS…SSVEARRFFN (603 aa)) enclose the PLA2c domain. The active-site Nucleophile is Ser-228. A disordered region spans residues 431 to 459 (SNDSSDSEDESQHPKGTENSEANEEYQNS). Residues 449 to 459 (NSEANEEYQNS) show a composition bias toward polar residues. Ser-505 carries the post-translational modification Phosphoserine; by MAPK. Asp-549 (proton acceptor) is an active-site residue.

Post-translationally, activated by phosphorylation on a serine residue.

It localises to the cytoplasm. It is found in the cytoplasmic vesicle. It carries out the reaction a 1,2-diacyl-sn-glycero-3-phosphocholine + H2O = a 1-acyl-sn-glycero-3-phosphocholine + a fatty acid + H(+). It catalyses the reaction a 1-acyl-sn-glycero-3-phosphocholine + H2O = sn-glycerol 3-phosphocholine + a fatty acid + H(+). Its activity is regulated as follows. Stimulated by agonists such as ATP, EGF, thrombin and bradykinin as well as by cytosolic Ca(2+). Selectively hydrolyzes arachidonyl phospholipids in the sn-2 position releasing arachidonic acid. Together with its lysophospholipid activity, it is implicated in the initiation of the inflammatory response. This Gallus gallus (Chicken) protein is Cytosolic phospholipase A2 (PLA2G4A).